Consider the following 102-residue polypeptide: Protein ORF28 (102 aa).

Residues 28–48 traverse the membrane as a helical segment; it reads VIGLITVLFLLVIGACVYCCI.

It localises to the host membrane. This is Protein ORF28 (ORF28) from Homo sapiens (Human).